The sequence spans 429 residues: Histidinol dehydrogenase (429 aa).

Positions 130, 191, and 214 each coordinate NAD(+). Residues S237, Q259, and H262 each contribute to the substrate site. Residues Q259 and H262 each contribute to the Zn(2+) site. Residues E327 and H328 each act as proton acceptor in the active site. H328, D361, E415, and H420 together coordinate substrate. D361 provides a ligand contact to Zn(2+). Residue H420 coordinates Zn(2+).

The protein belongs to the histidinol dehydrogenase family. The cofactor is Zn(2+).

It carries out the reaction L-histidinol + 2 NAD(+) + H2O = L-histidine + 2 NADH + 3 H(+). It functions in the pathway amino-acid biosynthesis; L-histidine biosynthesis; L-histidine from 5-phospho-alpha-D-ribose 1-diphosphate: step 9/9. Functionally, catalyzes the sequential NAD-dependent oxidations of L-histidinol to L-histidinaldehyde and then to L-histidine. This Geobacter sulfurreducens (strain ATCC 51573 / DSM 12127 / PCA) protein is Histidinol dehydrogenase.